Here is a 146-residue protein sequence, read N- to C-terminus: MGTPQSSGLRSIRVAVRKTCTMVNVWPLCSVRSSTMGSRCSKANQLTPCDSTWKTYGNVSWNTVRLASLYSSCLTRTLVMPRSTPYASVTLSCAVLTSRKPQCTTSGFRTVRIAMRSCLTWALRVMTFIAIIRAARTLDSTSNASS.

This chain is Gene 19.2 protein (19.2), found in Escherichia coli (Bacteriophage T3).